Consider the following 409-residue polypeptide: Immediate early response gene 5-like protein (409 aa).

2 disordered regions span residues 168–237 and 312–335; these read QPPH…PSSS and GQEE…GGTP. Positions 184 to 195 are enriched in pro residues; that stretch reads QPGPAPLPPPAP. Composition is skewed to low complexity over residues 196 to 212 and 220 to 237; these read AALC…CSAP and PPTV…PSSS. A compositionally biased stretch (acidic residues) spans 313–324; that stretch reads QEEEDDEEEDAG.

This sequence belongs to the IER family.

The protein is Immediate early response gene 5-like protein (Ier5l) of Rattus norvegicus (Rat).